The chain runs to 512 residues: Multidrug resistance protein 3 (512 aa).

Helical transmembrane passes span 13–33 (FVVL…TIVA), 48–68 (KFAW…PIYG), 79–99 (FFLF…IAQT), 109–129 (IQGI…FDLF), 139–159 (GMFG…GAII), 163–183 (ISWH…LFFI), 200–220 (WGGA…LELG), 228–248 (SIQI…FFIV), 272–292 (ILAF…PIFV), 304–324 (GFIL…GGIF), 333–353 (LMLI…NMTP), 358–378 (VWLT…FSLL), 399–421 (SFLR…TNVF), and 475–495 (ITYV…TILF).

It belongs to the major facilitator superfamily. EmrB family.

Its subcellular location is the cell membrane. Its function is as follows. Confers resistance to puromycin, tosufloxacin and norfloxacin. This chain is Multidrug resistance protein 3 (bmr3), found in Bacillus subtilis (strain 168).